The following is a 305-amino-acid chain: Putative lipid kinase SAS0691 (305 aa).

The DAGKc domain occupies 3-139 (NKYTHGVLFY…YDVIKINNQY (137 aa)). ATP-binding positions include Ser44, 74-80 (GDGTVNE), and Thr101. Residues Ser220, Asp223, and Glu225 each coordinate Mg(2+). Catalysis depends on Glu281, which acts as the Proton acceptor.

Belongs to the diacylglycerol/lipid kinase family. Mg(2+) is required as a cofactor.

In terms of biological role, may catalyze the ATP-dependent phosphorylation of lipids other than diacylglycerol (DAG). This chain is Putative lipid kinase SAS0691, found in Staphylococcus aureus (strain MSSA476).